The primary structure comprises 235 residues: Heme oxygenase (235 aa).

Residue histidine 19 coordinates heme b.

The protein belongs to the heme oxygenase family.

The protein localises to the plastid. The protein resides in the chloroplast. It catalyses the reaction heme b + 3 reduced [NADPH--hemoprotein reductase] + 3 O2 = biliverdin IXalpha + CO + Fe(2+) + 3 oxidized [NADPH--hemoprotein reductase] + 3 H2O + H(+). Functionally, catalyzes the opening of the heme ring with the release of iron. Key enzyme in the synthesis of the chromophoric part of the photosynthetic antennae. The protein is Heme oxygenase (pbsA) of Rhodella violacea (Red alga).